Reading from the N-terminus, the 365-residue chain is Histidinol-phosphate aminotransferase 2 (365 aa).

Lys222 carries the post-translational modification N6-(pyridoxal phosphate)lysine.

Belongs to the class-II pyridoxal-phosphate-dependent aminotransferase family. Histidinol-phosphate aminotransferase subfamily. As to quaternary structure, homodimer. Pyridoxal 5'-phosphate is required as a cofactor.

The catalysed reaction is L-histidinol phosphate + 2-oxoglutarate = 3-(imidazol-4-yl)-2-oxopropyl phosphate + L-glutamate. It functions in the pathway amino-acid biosynthesis; L-histidine biosynthesis; L-histidine from 5-phospho-alpha-D-ribose 1-diphosphate: step 7/9. In Bordetella parapertussis (strain 12822 / ATCC BAA-587 / NCTC 13253), this protein is Histidinol-phosphate aminotransferase 2 (hisC2).